The primary structure comprises 1408 residues: Protein patched homolog 1 (1408 aa).

Residues 1–20 are disordered; it reads MLTLLEPPGAKRSPTVGNYN. Residues 1–136 lie on the Cytoplasmic side of the membrane; it reads MLTLLEPPGA…GNTVHRNAWS (136 aa). A helical membrane pass occupies residues 137–157; sequence IILAVSMIFAVCCYGLQYVHI. Residues 158 to 649 are Extracellular-facing; sequence ETDIVKLWVA…STSIADMLEE (492 aa). Residues 455–479 form a disordered region; that stretch reads STAPIPTTTTLSPEEARAAEEKEKK. Residues 468–479 show a composition bias toward basic and acidic residues; that stretch reads EEARAAEEKEKK. N-linked (GlcNAc...) asparagine glycosylation occurs at N599. Residues 650–670 form a helical membrane-spanning segment; it reads FCQFNYTIILAGYALMLAYAI. The 163-residue stretch at 654-816 folds into the SSD domain; the sequence is NYTIILAGYA…LTIYPAIISI (163 aa). The Cytoplasmic segment spans residues 671–686; sequence VTQARFDNCLPATESS. Residues 687 to 707 form a helical membrane-spanning segment; it reads MGLALAGVLVVTFASVAGLGL. Topologically, residues 708 to 709 are extracellular; sequence AT. Residues 710–730 form a helical membrane-spanning segment; that stretch reads WFGIEFNAATTQIVPFLTLGI. Residues 731–765 are Cytoplasmic-facing; the sequence is GVDNMFMLLHNYRDVVKLAGGHAEMAILMRETGMS. A helical transmembrane segment spans residues 766–786; sequence ILCTSINNILSFLTGTLLPIP. Residues 787–795 lie on the Extracellular side of the membrane; it reads ALRSFCAQS. The helical transmembrane segment at 796-816 threads the bilayer; it reads SILLTFNFIAILTIYPAIISI. Over 817 to 901 the chain is Cytoplasmic; it reads DLRRKKAQRR…YYYIPFISKP (85 aa). The chain crosses the membrane as a helical span at residues 902–922; that stretch reads ASKVAIIVGCCALLGASFIGM. Topologically, residues 923–1175 are extracellular; sequence RQSTLGLELG…QGIAFTFWEQ (253 aa). N1026 and N1036 each carry an N-linked (GlcNAc...) asparagine glycan. Residues 1176–1196 traverse the membrane as a helical segment; it reads YLFLTGNLMQAISIITISVFC. Topologically, residues 1197-1217 are cytoplasmic; it reads VISVLLFNPWAALMVVCILGI. The next 2 helical transmembrane spans lie at 1218 to 1238 and 1239 to 1259; these read MTCE…PVSA and VTLI…VVSF. Residues 1260–1276 lie on the Extracellular side of the membrane; that stretch reads LTALGTRSQRTSSAVDR. Residues 1277–1297 traverse the membrane as a helical segment; sequence VFVPVIHGSFSTLLGILMLGF. Topologically, residues 1298–1305 are cytoplasmic; sequence SEFEFVVK. Residues 1306–1326 traverse the membrane as a helical segment; sequence YFFIVMTALICIGIINGLILL. Residues 1327 to 1408 lie on the Extracellular side of the membrane; that stretch reads PVLLSWFGPR…GNNTRRLPAV (82 aa). The tract at residues 1342–1408 is disordered; sequence TGGKTTLTLP…GNNTRRLPAV (67 aa). A compositionally biased stretch (low complexity) spans 1387–1408; the sequence is TTRTSGGNRGTVGNNTRRLPAV.

It belongs to the patched family. As to expression, germ line and its progenitors.

The protein localises to the membrane. In terms of biological role, required but not essential for cytokinesis of mitotically proliferating germ cells. The sequence is that of Protein patched homolog 1 (ptc-1) from Caenorhabditis elegans.